The sequence spans 1373 residues: DNA-directed RNA polymerase subunit beta (1373 aa).

Belongs to the RNA polymerase beta chain family. As to quaternary structure, the RNAP catalytic core consists of 2 alpha, 1 beta, 1 beta' and 1 omega subunit. When a sigma factor is associated with the core the holoenzyme is formed, which can initiate transcription.

The catalysed reaction is RNA(n) + a ribonucleoside 5'-triphosphate = RNA(n+1) + diphosphate. Functionally, DNA-dependent RNA polymerase catalyzes the transcription of DNA into RNA using the four ribonucleoside triphosphates as substrates. The protein is DNA-directed RNA polymerase subunit beta of Rickettsia massiliae.